A 368-amino-acid polypeptide reads, in one-letter code: MAMLVEPPNGIKQQGKHYYSMWQTLFEIDTKYVPIKPIGRGAYGVVCSSINRETNERVAIKKIHNVFENRVDALRTLRELKLLRHVRHENVIALKDVMLPANRSSFKDVYLVYELMDTDLHQIIKSSQSLSDDHCKYFLFQLLRGLKYLHSANILHRDLKPGNLLVNANCDLKICDFGLARTSQGNEQFMTEYVVTRWYRAPELLLCCDNYGTSIDVWSVGCIFAEILGRKPIFPGTECLNQLKLIINVVGSQQESDIRFIDNPKARRFIKSLPYSRGTHLSNLYPQANPLAIDLLQRMLVFDPTKRISVTDALLHPYMAGLFDPGSNPPAHVPISLDIDENMEEPVIREMMWNEMLYYHPEAEISNA.

The region spanning 32–319 (YVPIKPIGRG…VTDALLHPYM (288 aa)) is the Protein kinase domain. Residues 38–46 (IGRGAYGVV) and Lys-61 contribute to the ATP site. The active-site Proton acceptor is Asp-158. Thr-191 is modified (phosphothreonine). The short motif at 191–193 (TEY) is the TXY element. Residue Tyr-193 is modified to Phosphotyrosine. Thr-196 bears the Phosphothreonine mark.

Belongs to the protein kinase superfamily. CMGC Ser/Thr protein kinase family. MAP kinase subfamily. As to quaternary structure, interacts with MKK3. Mg(2+) serves as cofactor. In terms of processing, dually phosphorylated on Thr-191 and Tyr-193, which activates the enzyme.

It catalyses the reaction L-seryl-[protein] + ATP = O-phospho-L-seryl-[protein] + ADP + H(+). The catalysed reaction is L-threonyl-[protein] + ATP = O-phospho-L-threonyl-[protein] + ADP + H(+). Its activity is regulated as follows. Activated by threonine and tyrosine phosphorylation. Activated in response to hydrogen peroxide. Activation is triggered by MAPKKK17 and MAPKKK18 in a MKK3-dependent manner. Its function is as follows. MKK3-MPK7 module acts as a positive regulator of PR1 gene expression. This chain is Mitogen-activated protein kinase 7 (MPK7), found in Arabidopsis thaliana (Mouse-ear cress).